Consider the following 434-residue polypeptide: Acyl transferase 15 (434 aa).

Residues His-164 and Asp-371 each act as proton acceptor in the active site.

Belongs to the plant acyltransferase family.

Functionally, involved in the incorporation of ferulate into the cell wall. This Oryza sativa subsp. japonica (Rice) protein is Acyl transferase 15.